The following is a 640-amino-acid chain: Spindle assembly abnormal protein 6 homolog (640 aa).

Residues 40–92 (VHKKDLAVRLTDDADPFFLYNLVISEEDFQSLKSQQGLLVDFSAFPQKFIDLL) enclose the PISA domain. Residues 154–475 (LARCLKCLKE…KQLLKTNENV (322 aa)) adopt a coiled-coil conformation.

Nine homodimers form a cartwheel structure with an internal diameter of 23 nM and radial spokes connecting to the microtubule triplets.

Its subcellular location is the cytoplasm. The protein localises to the cytoskeleton. It is found in the microtubule organizing center. It localises to the centrosome. Central scaffolding component of the centrioles ensuring their 9-fold symmetry. Required for centrosome biogenesis and duplication: required both for mother-centriole-dependent centriole duplication and deuterosome-dependent centriole amplification in multiciliated cells. The protein is Spindle assembly abnormal protein 6 homolog (SASS6) of Gallus gallus (Chicken).